The primary structure comprises 77 residues: Liver-expressed antimicrobial peptide 2 (77 aa).

Positions 1–22 are cleaved as a signal peptide; it reads MWHLKLCAVLMIFLLLLGQIDG. The propeptide occupies 23–37; that stretch reads SPIPEVSSAKRRPRR. 2 disulfide bridges follow: Cys-54-Cys-65 and Cys-60-Cys-70.

Belongs to the LEAP2 family.

The protein resides in the secreted. In terms of biological role, has an antimicrobial activity. This chain is Liver-expressed antimicrobial peptide 2 (LEAP2), found in Homo sapiens (Human).